Consider the following 308-residue polypeptide: Extended-spectrum beta-lactamase PER-1 (308 aa).

Positions 1–26 are cleaved as a signal peptide; sequence MNVIIKAVVTASTLLMVSFSSFETSA. Serine 71 functions as the Nucleophile; acyl-ester intermediate in the catalytic mechanism. Lysine 74, serine 135, and glutamate 171 together coordinate a beta-lactam.

Belongs to the class-A beta-lactamase family. As to quaternary structure, monomer.

Its subcellular location is the secreted. It carries out the reaction a beta-lactam + H2O = a substituted beta-amino acid. With respect to regulation, inhibited by the beta-lactamase-blocking agents clavulanic acid, tazobactam and sulbactam. Not inhibited by EDTA. Its function is as follows. Extended-spectrum beta-lactamase (ESBL) which confers resistance to penicillins, as well as first-, second- and third-generation cephalosporins, but not the carbapenem, imipenem, in the JM109 strain of E.coli. Has cefotaxime-hydrolyzing activity. This Pseudomonas aeruginosa protein is Extended-spectrum beta-lactamase PER-1.